Consider the following 180-residue polypeptide: NAD(P)H-quinone oxidoreductase subunit I, chloroplastic (180 aa).

4Fe-4S ferredoxin-type domains follow at residues 55–84 (GRIH…VDWR) and 95–124 (LNYS…MTEE). Residues Cys-64, Cys-67, Cys-70, Cys-74, Cys-104, Cys-107, Cys-110, and Cys-114 each coordinate [4Fe-4S] cluster.

Belongs to the complex I 23 kDa subunit family. As to quaternary structure, NDH is composed of at least 16 different subunits, 5 of which are encoded in the nucleus. It depends on [4Fe-4S] cluster as a cofactor.

It is found in the plastid. It localises to the chloroplast thylakoid membrane. It catalyses the reaction a plastoquinone + NADH + (n+1) H(+)(in) = a plastoquinol + NAD(+) + n H(+)(out). The enzyme catalyses a plastoquinone + NADPH + (n+1) H(+)(in) = a plastoquinol + NADP(+) + n H(+)(out). Its function is as follows. NDH shuttles electrons from NAD(P)H:plastoquinone, via FMN and iron-sulfur (Fe-S) centers, to quinones in the photosynthetic chain and possibly in a chloroplast respiratory chain. The immediate electron acceptor for the enzyme in this species is believed to be plastoquinone. Couples the redox reaction to proton translocation, and thus conserves the redox energy in a proton gradient. This Dioscorea elephantipes (Elephant's foot yam) protein is NAD(P)H-quinone oxidoreductase subunit I, chloroplastic.